Reading from the N-terminus, the 258-residue chain is Imidazole glycerol phosphate synthase subunit HisF (258 aa).

Active-site residues include aspartate 12 and aspartate 131.

The protein belongs to the HisA/HisF family. Heterodimer of HisH and HisF.

Its subcellular location is the cytoplasm. It catalyses the reaction 5-[(5-phospho-1-deoxy-D-ribulos-1-ylimino)methylamino]-1-(5-phospho-beta-D-ribosyl)imidazole-4-carboxamide + L-glutamine = D-erythro-1-(imidazol-4-yl)glycerol 3-phosphate + 5-amino-1-(5-phospho-beta-D-ribosyl)imidazole-4-carboxamide + L-glutamate + H(+). Its pathway is amino-acid biosynthesis; L-histidine biosynthesis; L-histidine from 5-phospho-alpha-D-ribose 1-diphosphate: step 5/9. Functionally, IGPS catalyzes the conversion of PRFAR and glutamine to IGP, AICAR and glutamate. The HisF subunit catalyzes the cyclization activity that produces IGP and AICAR from PRFAR using the ammonia provided by the HisH subunit. This Pseudarthrobacter chlorophenolicus (strain ATCC 700700 / DSM 12829 / CIP 107037 / JCM 12360 / KCTC 9906 / NCIMB 13794 / A6) (Arthrobacter chlorophenolicus) protein is Imidazole glycerol phosphate synthase subunit HisF.